Reading from the N-terminus, the 305-residue chain is Glycine--tRNA ligase alpha subunit (305 aa).

The protein belongs to the class-II aminoacyl-tRNA synthetase family. In terms of assembly, tetramer of two alpha and two beta subunits.

The protein localises to the cytoplasm. The catalysed reaction is tRNA(Gly) + glycine + ATP = glycyl-tRNA(Gly) + AMP + diphosphate. This Ligilactobacillus salivarius (strain UCC118) (Lactobacillus salivarius) protein is Glycine--tRNA ligase alpha subunit.